The chain runs to 197 residues: RIP-like protein (197 aa).

Residues 1 to 20 (MNSTQSPVYRTSVEQKRHAQ) form a disordered region. An RIP-type zinc finger spans residues 122–191 (CPVCQIKNLR…GQLYDMCGSC (70 aa)).

In Drosophila melanogaster (Fruit fly), this protein is RIP-like protein (Ripalpha).